We begin with the raw amino-acid sequence, 132 residues long: MAFQTQGSNLRALLVEDIKVNRMILSQMLRKFQVETTVVQNGKEAVELFLGGETFDIVLTDNLMPIMTGPEAISKIRAMGATDVMIVGVSVDANSMEEFKDAGADLCVPKLKLEILEHILQETRSKKNKSSA.

Positions 11–125 (RALLVEDIKV…LEHILQETRS (115 aa)) constitute a Response regulatory domain. Asp-61 bears the 4-aspartylphosphate mark.

The protein belongs to the ARR family. Type-C subfamily. Post-translationally, two-component system major event consists of a His-to-Asp phosphorelay between a sensor histidine kinase (HK) and a response regulator (RR). In plants, the His-to-Asp phosphorelay involves an additional intermediate named Histidine-containing phosphotransfer protein (HPt). This multistep phosphorelay consists of a His-Asp-His-Asp sequential transfer of a phosphate group between first a His and an Asp of the HK protein, followed by the transfer to a conserved His of the HPt protein and finally the transfer to an Asp in the receiver domain of the RR protein.

In terms of biological role, functions as a response regulator involved in His-to-Asp phosphorelay signal transduction system. Phosphorylation of the Asp residue in the receiver domain activates the ability of the protein to promote the transcription of target genes. May directly activate some type-A response regulators in response to cytokinins. The sequence is that of Two-component response regulator ORR42 from Oryza sativa subsp. japonica (Rice).